Consider the following 576-residue polypeptide: MSILLRPSSSPSLCSSLKLFRLSSPDSLIDAAVLRNRTKPSQSFRMEVVSSNSTCLSSISVGEDFPSEYEQWLPVPDPESRRRAGVLLHPTSFRGPHGIGDLGEEAFRFIDWLHSTGCSVWQVLPLVPPDEGGSPYAGQDANCGNTLLISLDELVKDGLLIKDELPQPIDADSVNYQTANKLKSPLITKAAKRLIDGNGELKSKLLDFRNDPSISCWLEDAAYFAAIDNTLNAYSWFEWPEPLKNRHLSALEAIYESQKEFIDLFIAKQFLFQRQWQKVREYARRQGVDIMGDMPIYVGYHSADVWANKKHFLLNKKGFPLLVSGVPPDLFSETGQLWGSPLYDWKAMESDQYSWWVNRIRRAQDLYDECRIDHFRGFAGFWAVPSEAKVAMVGRWKVGPGKSLFDAISKGVGKIKIIAEDLGVITKDVVELRKSIGAPGMAVLQFAFGGGADNPHLPHNHEVNQVVYSGTHDNDTIRGWWDTLDQEEKSKAMKYLSIAGEDDISWSVIQAAFSSTAQTAIIPMQDILGLGSSARMNTPATEVGNWGWRIPSSTSFDNLETESDRLRDLLSLYGRL.

The transit peptide at 1–45 (MSILLRPSSSPSLCSSLKLFRLSSPDSLIDAAVLRNRTKPSQSFR) directs the protein to the chloroplast.

Belongs to the disproportionating enzyme family.

The protein localises to the plastid. It is found in the chloroplast. It localises to the amyloplast. It carries out the reaction Transfers a segment of a (1-&gt;4)-alpha-D-glucan to a new position in an acceptor, which may be glucose or a (1-&gt;4)-alpha-D-glucan.. Chloroplastic alpha-glucanotransferase involved in maltotriose metabolism. Probably uses maltotriose as substrate to transfer a maltosyl unit from one molecule to another, resulting in glucose and maltopentaose. The latter can then be further metabolized to maltose and maltotriose by beta-amylase. Required for normal starch degradation in leaves. This is 4-alpha-glucanotransferase DPE1, chloroplastic/amyloplastic (DPE1) from Arabidopsis thaliana (Mouse-ear cress).